The primary structure comprises 260 residues: Phosphatidate cytidylyltransferase (260 aa).

7 helical membrane-spanning segments follow: residues 9–29 (IIAL…LMIF), 46–66 (MIKF…IIML), 70–90 (AGPW…FIVL), 102–122 (FMDA…FMFF), 130–150 (LHYI…AYLF), 172–192 (FIGG…FVDF), and 196–216 (VWIL…GDLV).

Belongs to the CDS family.

It localises to the cell membrane. It catalyses the reaction a 1,2-diacyl-sn-glycero-3-phosphate + CTP + H(+) = a CDP-1,2-diacyl-sn-glycerol + diphosphate. The protein operates within phospholipid metabolism; CDP-diacylglycerol biosynthesis; CDP-diacylglycerol from sn-glycerol 3-phosphate: step 3/3. The chain is Phosphatidate cytidylyltransferase (cdsA) from Staphylococcus aureus (strain COL).